Reading from the N-terminus, the 1216-residue chain is Tyrosine-protein kinase receptor ver-4 (1216 aa).

The Extracellular segment spans residues 1–789 (MRVSLTEFLV…VKVAGASSSS (789 aa)). Residues N142, N195, N206, N245, N283, N333, N348, N384, N402, N412, N496, N508, N588, N599, N664, and N703 are each glycosylated (N-linked (GlcNAc...) asparagine). Ig-like C2-type domains are found at residues 596–691 (KSVN…TSIS) and 697–783 (PPFL…VKVA). C619 and C675 form a disulfide bridge. An intrachain disulfide couples C721 to C765. A helical transmembrane segment spans residues 790–810 (FFWLFITFFAFVVVGIVVSLL). Residues 811 to 1216 (WKLFGQKDLK…WVQKPTQLFF (406 aa)) lie on the Cytoplasmic side of the membrane. The region spanning 870–1181 (LEILETLGSG…IKLFKNHIQY (312 aa)) is the Protein kinase domain. Residues 876–884 (LGSGQFGIV) and K908 contribute to the ATP site. D1042 acts as the Proton acceptor in catalysis.

The protein belongs to the protein kinase superfamily. Tyr protein kinase family.

The protein localises to the cell membrane. The enzyme catalyses L-tyrosyl-[protein] + ATP = O-phospho-L-tyrosyl-[protein] + ADP + H(+). Functionally, receptor tyrosine kinase which may be involved, downstream of pvf-1, in the positioning of ray 1, the most anterior ray sensillum in the male tail. This chain is Tyrosine-protein kinase receptor ver-4, found in Caenorhabditis elegans.